The chain runs to 139 residues: D-ribose pyranase (139 aa).

Histidine 20 acts as the Proton donor in catalysis. Substrate contacts are provided by residues aspartate 28, histidine 106, and 128–130; that span reads FAN.

It belongs to the RbsD / FucU family. RbsD subfamily. As to quaternary structure, homodecamer.

Its subcellular location is the cytoplasm. The enzyme catalyses beta-D-ribopyranose = beta-D-ribofuranose. It participates in carbohydrate metabolism; D-ribose degradation; D-ribose 5-phosphate from beta-D-ribopyranose: step 1/2. Catalyzes the interconversion of beta-pyran and beta-furan forms of D-ribose. This Yersinia pseudotuberculosis serotype O:1b (strain IP 31758) protein is D-ribose pyranase.